A 226-amino-acid polypeptide reads, in one-letter code: Enolase-phosphatase E1 (226 aa).

Belongs to the HAD-like hydrolase superfamily. MasA/MtnC family. Monomer. The cofactor is Mg(2+).

It catalyses the reaction 5-methylsulfanyl-2,3-dioxopentyl phosphate + H2O = 1,2-dihydroxy-5-(methylsulfanyl)pent-1-en-3-one + phosphate. It participates in amino-acid biosynthesis; L-methionine biosynthesis via salvage pathway; L-methionine from S-methyl-5-thio-alpha-D-ribose 1-phosphate: step 3/6. The protein operates within amino-acid biosynthesis; L-methionine biosynthesis via salvage pathway; L-methionine from S-methyl-5-thio-alpha-D-ribose 1-phosphate: step 4/6. Its function is as follows. Bifunctional enzyme that catalyzes the enolization of 2,3-diketo-5-methylthiopentyl-1-phosphate (DK-MTP-1-P) into the intermediate 2-hydroxy-3-keto-5-methylthiopentenyl-1-phosphate (HK-MTPenyl-1-P), which is then dephosphorylated to form the acireductone 1,2-dihydroxy-3-keto-5-methylthiopentene (DHK-MTPene). The sequence is that of Enolase-phosphatase E1 from Shewanella amazonensis (strain ATCC BAA-1098 / SB2B).